The primary structure comprises 333 residues: Glyceraldehyde-3-phosphate dehydrogenase (333 aa).

Ser1 carries the post-translational modification N-acetylserine. Residues 10 to 11, Asp31, and Ser118 contribute to the NAD(+) site; that span reads RI. D-glyceraldehyde 3-phosphate is bound by residues 147–149, Thr178, 207–208, and Arg230; these read SCT and TG. The active-site Nucleophile is Cys148. Asn312 lines the NAD(+) pocket.

This sequence belongs to the glyceraldehyde-3-phosphate dehydrogenase family. Homotetramer.

The protein resides in the cytoplasm. The catalysed reaction is D-glyceraldehyde 3-phosphate + phosphate + NAD(+) = (2R)-3-phospho-glyceroyl phosphate + NADH + H(+). Its pathway is carbohydrate degradation; glycolysis; pyruvate from D-glyceraldehyde 3-phosphate: step 1/5. The sequence is that of Glyceraldehyde-3-phosphate dehydrogenase from Homarus americanus (American lobster).